A 212-amino-acid chain; its full sequence is Cytidylate kinase (212 aa).

7–15 serves as a coordination point for ATP; it reads GPAASGKGT.

The protein belongs to the cytidylate kinase family. Type 1 subfamily.

It localises to the cytoplasm. The catalysed reaction is CMP + ATP = CDP + ADP. It catalyses the reaction dCMP + ATP = dCDP + ADP. This is Cytidylate kinase from Rhodopseudomonas palustris (strain ATCC BAA-98 / CGA009).